A 157-amino-acid polypeptide reads, in one-letter code: Endoribonuclease YbeY (157 aa).

Zn(2+)-binding residues include His-114, His-118, and His-124.

It belongs to the endoribonuclease YbeY family. The cofactor is Zn(2+).

It is found in the cytoplasm. Single strand-specific metallo-endoribonuclease involved in late-stage 70S ribosome quality control and in maturation of the 3' terminus of the 16S rRNA. The sequence is that of Endoribonuclease YbeY from Klebsiella pneumoniae (strain 342).